The following is a 396-amino-acid chain: Elongation factor Tu 2 (396 aa).

The tr-type G domain maps to 10–206; sequence KPHVNVGTIG…ALDSYIPLPE (197 aa). Positions 19-26 are G1; that stretch reads GHVDHGKT. A GTP-binding site is contributed by 19-26; it reads GHVDHGKT. Threonine 26 lines the Mg(2+) pocket. Positions 60–64 are G2; that stretch reads GITIN. Positions 81–84 are G3; it reads DCPG. Residues 81–85 and 136–139 contribute to the GTP site; these read DCPGH and NKCD. Residues 136–139 are G4; the sequence is NKCD. Residues 174 to 176 are G5; it reads SAK.

Belongs to the TRAFAC class translation factor GTPase superfamily. Classic translation factor GTPase family. EF-Tu/EF-1A subfamily. Monomer.

The protein localises to the cytoplasm. It catalyses the reaction GTP + H2O = GDP + phosphate + H(+). Functionally, GTP hydrolase that promotes the GTP-dependent binding of aminoacyl-tRNA to the A-site of ribosomes during protein biosynthesis. This Albidiferax ferrireducens (strain ATCC BAA-621 / DSM 15236 / T118) (Rhodoferax ferrireducens) protein is Elongation factor Tu 2.